Consider the following 244-residue polypeptide: Isoprenyl transferase (244 aa).

Residue Asp23 is part of the active site. Asp23 is a binding site for Mg(2+). Substrate is bound by residues 24–27 (GNGR), Trp28, Arg36, His40, and 68–70 (STE). The Proton acceptor role is filled by Asn71. Residues Trp72, Arg74, Arg191, and 197 to 199 (RMS) each bind substrate. A Mg(2+)-binding site is contributed by Glu210.

Belongs to the UPP synthase family. Homodimer. Mg(2+) is required as a cofactor.

In terms of biological role, catalyzes the condensation of isopentenyl diphosphate (IPP) with allylic pyrophosphates generating different type of terpenoids. This Lactococcus lactis subsp. lactis (strain IL1403) (Streptococcus lactis) protein is Isoprenyl transferase.